A 216-amino-acid polypeptide reads, in one-letter code: MLSDMSLIATLSFFTLLPFLVAAGTCYIKFSIVFVMVRNALGLQQVPSNMTLNGIALIMALFVMKPIIEAGYENYLNGPQKFDTISDIVRFSDSGLMEYKQYLKKHTDLELARFFQRSEEENADLKSAENNDYSLFSLLPAYALSEIKDAFKIGFYLYLPFVVVDLVISSILLALGMMMMSPITISVPIKLVLFVALDGWGILSKALIEQYINIPA.

A run of 4 helical transmembrane segments spans residues 8–28 (IATL…TCYI), 52–72 (LNGI…EAGY), 153–173 (IGFY…SILL), and 183–203 (ITIS…WGIL).

The protein belongs to the FliP/MopC/SpaP family.

It localises to the cell membrane. Functionally, required for surface presentation of invasion plasmid antigens. Could play a role in preserving the translocation competence of the ipa antigens. Required for invasion and for secretion of the three Ipa proteins. The sequence is that of Surface presentation of antigens protein SpaP (spaP) from Shigella flexneri.